The primary structure comprises 407 residues: WEB family protein At3g51720 (407 aa).

Coiled coils occupy residues 72 to 99, 128 to 217, and 247 to 278; these read KVLK…DKEN, SVGL…ARAA, and EEIL…EAEE.

The protein belongs to the WEB family.

This Arabidopsis thaliana (Mouse-ear cress) protein is WEB family protein At3g51720.